Consider the following 180-residue polypeptide: Symerythrin (180 aa).

The segment at residues 17–127 (FQDAVSHNNT…RRALETALEV (111 aa)) is a cross-link (3-(L-phenylalan-2'-yl)-L-valine (Phe-Val)). The region spanning 21-180 (VSHNNTDANA…RALENLLEVA (160 aa)) is the Ferritin-like diiron domain. Fe(3+) contacts are provided by glutamate 37, glutamate 40, glutamate 71, glutamate 128, glutamate 131, glutamate 162, and histidine 165.

In terms of assembly, monomer. It depends on Fe(3+) as a cofactor.

It is found in the plastid. The protein localises to the cyanelle. Functionally, exhibits oxidase-like and peroxidase-like activities in vitro. The chain is Symerythrin from Cyanophora paradoxa.